A 298-amino-acid chain; its full sequence is ADP-ribosylation factor GTPase-activating protein effector protein 2 (298 aa).

Ser2 carries the post-translational modification N-acetylserine. Positions 8 to 130 (KKALSALLRD…KWIGDLSSIE (123 aa)) constitute an Arf-GAP domain. A C4-type zinc finger spans residues 23 to 47 (CADCKAQLHPRWASWSLGVFICIKC). The disordered stretch occupies residues 137 to 180 (EPVLHKPSANHSLPASNARLDQSSNSLQKTQTQPPSHLLSTSRS). The segment covering 145–171 (ANHSLPASNARLDQSSNSLQKTQTQPP) has biased composition (polar residues). Residues Ser180, Ser183, and Ser207 each carry the phosphoserine modification.

Its subcellular location is the cytoplasm. The protein resides in the golgi apparatus. GTPase-activating protein for the ADP ribosylation factor family. The chain is ADP-ribosylation factor GTPase-activating protein effector protein 2 (AGE2) from Saccharomyces cerevisiae (strain ATCC 204508 / S288c) (Baker's yeast).